The sequence spans 997 residues: MRLLKYPLEGISGNVTSLVTIDAEYVVVCGSRGDIQVWHQQQLLDTAFDRCTLETLKPKYSFTFELKDDEDELVFAMGDRDCLYLGTEHSVYSYSGWLKALESGHTTLENKLIYTTVSQSIITDVKWDSLLDILFVLTDRPCKIHLFDTRSANKKEITSIALDKNSKPLTGVVDPSGAGTFTVLTSDRSIVVYHINRTGDYKEVKKLSQHVLVYPLHYKITMPPQADFLPIINSLKGSSGAAGSTATVLLNRNENYKVMSTLVPSASSNTKVLVHSPKMYEKANLKRGTISRYNLVATSTNTDGSIMIWNTKRGKPLFAPLNISDSAINDMIWSSNGLTLFAVSNDNVLYTFAFLQDDLGKTVPMEEIENIRQSNIIKEPLPIAYVITASDGLGDISTSKNQGLGVAADNSSNILSTDTNTNEKNLSTVNTTEPQTNSQSSSYNNKPESKLDSSKSEITSADSSDEKAKNLEARPIEAKSKKILNGKNLESKSSSVTTSDNIQKKVEDSKSNVSVTATEKKTKPDKKSIKSENGESKVNKAQNTISPKESNTTDNKSTTPDFKNPSYQVPKDLKRKPKEDALGNAVTKRAKKDLEPVDFLDTGLLLPNVAFSRVRLSTPLIRMNIDCTSSNDSKILLNIRNGSGNEQKPTIVKLLDKTVTPERTLFQDFIPKFVSLATSGDDFWACSSEDGTLYIFNDVGRKIIPPLTIGVPISFLEACGKYLLCVSSIGELYCWNIASSKLEFPVTTIFPLLSPSIRYSDDILTRAENITMCSVTNNGFPIATLSNGDGYMYDKNMETWLLVSDGWWAYGSQYWDSTNNSNLIPDSSTKPTEGQSSTEISKASIVTLLEKKTNNELTRKGRIKNLRRFARTILMKEGFENIEEIVTLSHLENKLLVTLRLEEQHEFKKLIKLYAVKLGELGYVDRLRDLFAWIISDSNDNGDLIPGINRKELVKTLLTACADLRSVQRVTIDYADMLGYLPNDIFFDCESQNDTGK.

WD repeat units lie at residues 10-48, 117-152, 153-194, 274-319, and 323-362; these read GISGNVTSLVTIDAEYVVVCGSRGDIQVWHQQQLLDTAF, VSQSIITDVKWDSLLDILFVLTDRPCKIHLFDTRSA, NKKE…VVYH, VHSP…PLFA, and ISDSAINDMIWSSNGLTLFAVSNDNVLYTFAFLQDDLGKT. The tract at residues 408-584 is disordered; that stretch reads ADNSSNILST…RKPKEDALGN (177 aa). The span at 409-446 shows a compositional bias: polar residues; sequence DNSSNILSTDTNTNEKNLSTVNTTEPQTNSQSSSYNNK. Over residues 464–480 the composition is skewed to basic and acidic residues; sequence SDEKAKNLEARPIEAKS. Residues 491–501 show a composition bias toward polar residues; that stretch reads SKSSSVTTSDN. Residues 518–538 are compositionally biased toward basic and acidic residues; it reads TEKKTKPDKKSIKSENGESKV. Over residues 539–567 the composition is skewed to polar residues; the sequence is NKAQNTISPKESNTTDNKSTTPDFKNPSY. WD repeat units lie at residues 665–706 and 708–745; these read LFQD…IIPP and TIGVPISFLEACGKYLLCVSSIGELYCWNIASSKLEFP.

The protein belongs to the WD repeat HIR1 family.

The protein resides in the nucleus. In terms of biological role, required for replication-independent chromatin assembly and for the periodic repression of histone gene transcription during the cell cycle. This chain is Protein HIR2 (HIR2), found in Candida glabrata (strain ATCC 2001 / BCRC 20586 / JCM 3761 / NBRC 0622 / NRRL Y-65 / CBS 138) (Yeast).